We begin with the raw amino-acid sequence, 140 residues long: uncharacterized protein (140 aa).

An N-terminal signal peptide occupies residues 1-22; that stretch reads MRLRWQTIVLLLLILGGASASA.

This is an uncharacterized protein from Archaeoglobus fulgidus (strain ATCC 49558 / DSM 4304 / JCM 9628 / NBRC 100126 / VC-16).